A 364-amino-acid chain; its full sequence is Histidinol-phosphate aminotransferase (364 aa).

The residue at position 220 (lysine 220) is an N6-(pyridoxal phosphate)lysine.

It belongs to the class-II pyridoxal-phosphate-dependent aminotransferase family. Histidinol-phosphate aminotransferase subfamily. As to quaternary structure, homodimer. The cofactor is pyridoxal 5'-phosphate.

It carries out the reaction L-histidinol phosphate + 2-oxoglutarate = 3-(imidazol-4-yl)-2-oxopropyl phosphate + L-glutamate. Its pathway is amino-acid biosynthesis; L-histidine biosynthesis; L-histidine from 5-phospho-alpha-D-ribose 1-diphosphate: step 7/9. This Stenotrophomonas maltophilia (strain R551-3) protein is Histidinol-phosphate aminotransferase.